The following is a 106-amino-acid chain: MNHFISGIPIHYYLILAMIIFTIGVAGVMVRRSAVLIFMSVELILNSVNLVFVTFSKALHQIDGEVVVFFVMAIAAAEAAIGLAIVIAIHRIKKTSYVDEMNLMKW.

The next 3 membrane-spanning stretches (helical) occupy residues 10 to 30, 35 to 55, and 67 to 87; these read IHYY…GVMV, VLIF…FVTF, and VVFF…AIVI.

The protein belongs to the complex I subunit 4L family. NDH-1 is composed of 14 different subunits. Subunits NuoA, H, J, K, L, M, N constitute the membrane sector of the complex.

The protein localises to the cell inner membrane. The catalysed reaction is a quinone + NADH + 5 H(+)(in) = a quinol + NAD(+) + 4 H(+)(out). Its function is as follows. NDH-1 shuttles electrons from NADH, via FMN and iron-sulfur (Fe-S) centers, to quinones in the respiratory chain. The immediate electron acceptor for the enzyme in this species is believed to be ubiquinone. Couples the redox reaction to proton translocation (for every two electrons transferred, four hydrogen ions are translocated across the cytoplasmic membrane), and thus conserves the redox energy in a proton gradient. This is NADH-quinone oxidoreductase subunit K from Leptospira interrogans serogroup Icterohaemorrhagiae serovar copenhageni (strain Fiocruz L1-130).